Consider the following 383-residue polypeptide: Acetylornithine deacetylase (383 aa).

Zn(2+) is bound at residue His80. Residue Asp82 is part of the active site. Residue Asp112 coordinates Zn(2+). Glu144 is an active-site residue. Zn(2+) contacts are provided by Glu145, Glu169, and His355.

This sequence belongs to the peptidase M20A family. ArgE subfamily. Homodimer. It depends on Zn(2+) as a cofactor. The cofactor is Co(2+). Glutathione serves as cofactor.

The protein resides in the cytoplasm. The catalysed reaction is N(2)-acetyl-L-ornithine + H2O = L-ornithine + acetate. It functions in the pathway amino-acid biosynthesis; L-arginine biosynthesis; L-ornithine from N(2)-acetyl-L-ornithine (linear): step 1/1. Functionally, catalyzes the hydrolysis of the amide bond of N(2)-acetylated L-amino acids. Cleaves the acetyl group from N-acetyl-L-ornithine to form L-ornithine, an intermediate in L-arginine biosynthesis pathway, and a branchpoint in the synthesis of polyamines. This Escherichia coli O157:H7 protein is Acetylornithine deacetylase.